The chain runs to 458 residues: tRNA modification GTPase MnmE (458 aa).

3 residues coordinate (6S)-5-formyl-5,6,7,8-tetrahydrofolate: R26, E88, and R127. Residues 224 to 378 (GLSTAIIGRP…IEDRINQLFF (155 aa)) form the TrmE-type G domain. Position 234 (N234) interacts with K(+). GTP is bound by residues 234–239 (NVGKSS), 253–259 (TDIAGTT), and 278–281 (DTAG). A Mg(2+)-binding site is contributed by S238. 3 residues coordinate K(+): T253, I255, and T258. Residue T259 coordinates Mg(2+). Residue K458 coordinates (6S)-5-formyl-5,6,7,8-tetrahydrofolate.

The protein belongs to the TRAFAC class TrmE-Era-EngA-EngB-Septin-like GTPase superfamily. TrmE GTPase family. Homodimer. Heterotetramer of two MnmE and two MnmG subunits. It depends on K(+) as a cofactor.

The protein resides in the cytoplasm. Exhibits a very high intrinsic GTPase hydrolysis rate. Involved in the addition of a carboxymethylaminomethyl (cmnm) group at the wobble position (U34) of certain tRNAs, forming tRNA-cmnm(5)s(2)U34. The polypeptide is tRNA modification GTPase MnmE (Streptococcus pyogenes serotype M6 (strain ATCC BAA-946 / MGAS10394)).